Reading from the N-terminus, the 295-residue chain is Protoheme IX farnesyltransferase (295 aa).

9 consecutive transmembrane segments (helical) span residues 9–29, 36–56, 80–100, 108–128, 135–155, 163–183, 209–229, 230–250, and 265–285; these read ITKP…FFLA, FGVF…GCVF, LVSL…GVAL, LAAL…SLYL, GTLV…CAVT, LTLL…IAIF, IMLY…GGYA, GLNY…MAWK, and FVFS…DFQV.

This sequence belongs to the UbiA prenyltransferase family. Protoheme IX farnesyltransferase subfamily.

It localises to the cell inner membrane. It carries out the reaction heme b + (2E,6E)-farnesyl diphosphate + H2O = Fe(II)-heme o + diphosphate. Its pathway is porphyrin-containing compound metabolism; heme O biosynthesis; heme O from protoheme: step 1/1. In terms of biological role, converts heme B (protoheme IX) to heme O by substitution of the vinyl group on carbon 2 of heme B porphyrin ring with a hydroxyethyl farnesyl side group. In Pseudomonas savastanoi pv. phaseolicola (strain 1448A / Race 6) (Pseudomonas syringae pv. phaseolicola (strain 1448A / Race 6)), this protein is Protoheme IX farnesyltransferase.